A 133-amino-acid chain; its full sequence is MSWQAYVDEHLMCDIDGQGQQLAASAIVGHDGSVWAQSSSFPQLKPEEITGIMKDFDEPGHLAPTGLHLGGTKYMVIQGEAGAVIRGKKGSGGITIKKTGQALVFGIYEEPVTPGQCNMVVERLGDYLAEQGL.

A disulfide bond links cysteine 13 and cysteine 117. Positions 83–99 match the Involved in PIP2 interaction motif; sequence AVIRGKKGSGGITIKKT. Phosphothreonine is present on threonine 113.

It belongs to the profilin family. In terms of assembly, occurs in many kinds of cells as a complex with monomeric actin in a 1:1 ratio. Post-translationally, phosphorylated by MAP kinases.

The protein resides in the cytoplasm. It localises to the cytoskeleton. Functionally, binds to actin and affects the structure of the cytoskeleton. At high concentrations, profilin prevents the polymerization of actin, whereas it enhances it at low concentrations. This Corylus avellana (European hazel) protein is Profilin-2.